We begin with the raw amino-acid sequence, 309 residues long: Virulence regulon transcriptional activator VirB (309 aa).

A DNA-binding region (H-T-H motif) is located at residues 152 to 171; it reads KDIAKKENLSRAKVTRAFQA.

The protein belongs to the ParB family.

In terms of biological role, transcription activator for the invasion antigens IpaB, IpaC and IpaD. VirB is itself regulated by VirF. The chain is Virulence regulon transcriptional activator VirB (virB) from Shigella flexneri.